The sequence spans 244 residues: Carboxy-S-adenosyl-L-methionine synthase (244 aa).

Residues tyrosine 40, 65-67, 90-91, 119-120, asparagine 134, and arginine 201 contribute to the S-adenosyl-L-methionine site; these read GCS, DN, and DL.

Belongs to the class I-like SAM-binding methyltransferase superfamily. Cx-SAM synthase family. As to quaternary structure, homodimer.

It catalyses the reaction prephenate + S-adenosyl-L-methionine = carboxy-S-adenosyl-L-methionine + 3-phenylpyruvate + H2O. Functionally, catalyzes the conversion of S-adenosyl-L-methionine (SAM) to carboxy-S-adenosyl-L-methionine (Cx-SAM). The sequence is that of Carboxy-S-adenosyl-L-methionine synthase from Trichlorobacter lovleyi (strain ATCC BAA-1151 / DSM 17278 / SZ) (Geobacter lovleyi).